The sequence spans 44 residues: Thioredoxin (44 aa).

A Thioredoxin domain is found at 2 to 44; sequence IELDKSNFEEEVLKAEGTVLVDFWSPSCEPCKALMPHVHDFEE. A disulfide bond links cysteine 29 and cysteine 32.

It belongs to the thioredoxin family.

Its function is as follows. Participates in various redox reactions through the reversible oxidation of its active center dithiol to a disulfide and catalyzes dithiol-disulfide exchange reactions. The polypeptide is Thioredoxin (trxA) (Tissierella creatinophila).